The chain runs to 194 residues: Cilia- and flagella-associated protein 107 (194 aa).

Mn stretches follow at residues 45–60 and 95–107; these read TPQS…FPDH and ISTY…RHGY.

In terms of assembly, microtubule inner protein component of sperm flagellar doublet microtubules. Expressed in airway epithelial cells.

The protein resides in the cytoplasm. It is found in the cytoskeleton. It localises to the cilium axoneme. Its subcellular location is the flagellum axoneme. Its function is as follows. Microtubule inner protein (MIP) part of the dynein-decorated doublet microtubules (DMTs) in cilia axoneme, which is required for motile cilia beating. This Homo sapiens (Human) protein is Cilia- and flagella-associated protein 107.